Consider the following 409-residue polypeptide: Probable ferredoxin reductase CtmF (409 aa).

Residues Ala-15, Asp-37, Lys-50, Val-83, Asp-279, and Val-298 each coordinate FAD.

The protein belongs to the FAD-dependent oxidoreductase family. FAD serves as cofactor.

It participates in terpene metabolism; monoterpene degradation. Involved in the degradation of the cyclic monoterpene limonene. Probably part of an electron transfer system involved in the oxidation of limonene to perillyl alcohol. The chain is Probable ferredoxin reductase CtmF from Castellaniella defragrans (strain DSM 12143 / CCUG 39792 / 65Phen) (Alcaligenes defragrans).